A 296-amino-acid chain; its full sequence is Decaprenyl diphosphate synthase (296 aa).

A disordered region spans residues 1-24; that stretch reads MARDARKRTSSNFPQLPPAPDDYP. The active site involves Asp-76. Asp-76 provides a ligand contact to Mg(2+). Substrate-binding positions include 76-80, Trp-81, Arg-89, His-93, 121-124, Trp-125, Arg-127, Arg-168, Arg-244, and 250-252; these read DGNGR, STEN, and RSS. Asn-124 acts as the Proton acceptor in catalysis. Glu-263 provides a ligand contact to Mg(2+). 292–294 is a substrate binding site; sequence RFG.

The protein belongs to the UPP synthase family. As to quaternary structure, homodimer. The cofactor is Mg(2+). Mn(2+) is required as a cofactor.

The protein localises to the cell membrane. It catalyses the reaction (2Z,6E)-farnesyl diphosphate + 7 isopentenyl diphosphate = (2Z,6Z,10Z,14Z,18Z,22Z,26Z,30Z,34E)-decaprenyl diphosphate + 7 diphosphate. It carries out the reaction n isopentenyl diphosphate + (2E,6E)-farnesyl diphosphate = a di-trans,poly-cis-polyprenyl diphosphate + n diphosphate. Its activity is regulated as follows. Activated by dithiothreitol and inhibited by EDTA. Functionally, catalyzes the sequential condensation of isopentenyl diphosphate (IPP) in the cis configuration with (2Z,6E)-farnesyl diphosphate (Z-FPP or EZ-FPP) generating the 50 carbon product trans,polycis-decaprenyl diphosphate. When (2E,6E)-farnesyl diphosphate (E-FPP or EE-FPP) is used in vitro, both primary products decaprenyl diphosphate and (2E,6E,10E)-geranylgeranyl diphosphate (EEE-GGPP) are synthesized. M.tuberculosis does not synthesize (2E,6E,10Z)-geranylgeranyl diphosphate (EEZ-GGPP) and heptaprenyl diphosphate. Can also accept many different allylic substrates, including E-geranyl diphosphate (E-GPP), neryl diphosphate (NPP), and all-trans-geranyl-geranyl diphosphate. In Mycobacterium tuberculosis (strain ATCC 25618 / H37Rv), this protein is Decaprenyl diphosphate synthase (uppS).